A 399-amino-acid chain; its full sequence is L-asparaginase-like protein GG20738 (399 aa).

The N-terminal stretch at 1–22 is a signal peptide; that stretch reads MLAQSCCLRLLILLLLCKSTCS. Disulfide bonds link cysteine 90/cysteine 95, cysteine 189/cysteine 205, and cysteine 344/cysteine 371.

Belongs to the Ntn-hydrolase family.

The protein is L-asparaginase-like protein GG20738 of Drosophila erecta (Fruit fly).